The chain runs to 907 residues: Collagen alpha-2(I) chain (907 aa).

2 disordered regions span residues 1-183 (GPMG…GIPG) and 199-907 (IPGP…PGPS). A compositionally biased stretch (basic and acidic residues) spans 19-33 (AGEDGHPGKPGRERG). 3 stretches are compositionally biased toward low complexity: residues 101–130 (VGAPGPAGARGSDGSVGPVGPAGPIGSAGP), 155–169 (AGPRGEVGIPGVSGP), and 206–221 (PGPVGAAGATGARGIV). N260 is subject to Deamidated asparagine. P272 carries the post-translational modification 4-hydroxyproline. 8 stretches are compositionally biased toward low complexity: residues 272–281 (PGIRGSRGIP), 292–307 (PPGSRGASGPAGVRGP), 340–362 (PAGIPGIDGRPGPAGPAGARGEP), 424–441 (PGESGAAGPAGPIGSRGP), 453–475 (EPGVVGAPGTAGPSGPSGIPGER), 495–507 (APGAVGAPGPAGA), 535–555 (VGPAGPNGFAGPAGAAGQPGA), and 566–581 (NGPVGPTGPVGSAGPA). Gly residues predominate over residues 591-600 (GSRGDGGPPG). 5 stretches are compositionally biased toward low complexity: residues 601–611 (ATGFPGAAGRT), 664–691 (EAGTAGAPGIPGPQGIIGAPGIIGIPGS), 706–745 (EPGPIGIAGPPGARGPPGAVGSPGVNGAPGEAGRDGNPGN), 756–766 (NSGPVGAAGAP), and 783–804 (EPGPVGSVGPAGAVGPRGPSGP). The span at 808–819 (RGDKGEPGDKGP) shows a compositional bias: basic and acidic residues. The span at 892–907 (AGPPGPPGPPGPPGPS) shows a compositional bias: pro residues.

It belongs to the fibrillar collagen family. As to quaternary structure, trimers of one alpha 2(I) and two alpha 1(I) chains. Interacts (via C-terminus) with TMEM131 (via PapD-L domain); the interaction is direct and is involved in assembly and TRAPPIII ER-to-Golgi transport complex-dependent secretion of collagen. Post-translationally, prolines at the third position of the tripeptide repeating unit (G-X-Y) are hydroxylated in some or all of the chains. Forms the fibrils of tendon, ligaments and bones. In bones, the fibrils are mineralized with calcium hydroxyapatite.

The protein localises to the secreted. Its subcellular location is the extracellular space. It localises to the extracellular matrix. Type I collagen is a member of group I collagen (fibrillar forming collagen). The chain is Collagen alpha-2(I) chain from Macrauchenia sp.